Consider the following 241-residue polypeptide: Uridylate kinase (241 aa).

Residue 13 to 16 (KVSG) coordinates ATP. UMP is bound at residue glycine 55. Residues glycine 56 and arginine 60 each coordinate ATP. Residues aspartate 75 and 136-143 (TGNPFFTT) contribute to the UMP site. ATP contacts are provided by threonine 163, glutamine 164, tyrosine 169, and aspartate 172.

Belongs to the UMP kinase family. Homohexamer.

The protein localises to the cytoplasm. The catalysed reaction is UMP + ATP = UDP + ADP. It participates in pyrimidine metabolism; CTP biosynthesis via de novo pathway; UDP from UMP (UMPK route): step 1/1. Inhibited by UTP. Its function is as follows. Catalyzes the reversible phosphorylation of UMP to UDP. This chain is Uridylate kinase, found in Parvibaculum lavamentivorans (strain DS-1 / DSM 13023 / NCIMB 13966).